The primary structure comprises 374 residues: Putative serine/threonine-protein kinase ZK507.3 (374 aa).

One can recognise a Protein kinase domain in the interval 25–296 (WKVIVELGKG…CKLTLKEPLV (272 aa)). ATP contacts are provided by residues 31–39 (LGKGGYGTV) and Lys60. Asp158 acts as the Proton acceptor in catalysis. Residues 302–374 (NDNESGSTPT…KTRNKKPSRK (73 aa)) are disordered. The span at 306–324 (SGSTPTTSATACSPSSSTG) shows a compositional bias: low complexity. Positions 334-343 (IASNIDQKSI) are enriched in polar residues. Basic residues predominate over residues 364–374 (TKTRNKKPSRK).

This sequence belongs to the protein kinase superfamily. Ser/Thr protein kinase family.

It catalyses the reaction L-seryl-[protein] + ATP = O-phospho-L-seryl-[protein] + ADP + H(+). The enzyme catalyses L-threonyl-[protein] + ATP = O-phospho-L-threonyl-[protein] + ADP + H(+). The polypeptide is Putative serine/threonine-protein kinase ZK507.3 (Caenorhabditis elegans).